A 463-amino-acid chain; its full sequence is Ammonium transporter 1 (463 aa).

Over 1–39 (MVAGEIIKGVAAEITNGSSSSVVQKYLDCANQVAPDPGN) the chain is Extracellular. Residues 40 to 60 (TTWVLLSTILVLGMMPALAFF) traverse the membrane as a helical segment. Over 61–76 (EAGLLRSKNTLSIITQ) the chain is Cytoplasmic. A helical membrane pass occupies residues 77–97 (IMSGIVVLTVMWQAFGYSLTF). The Extracellular portion of the chain corresponds to 98-127 (GPDQKGIIGNLDHAFLINVSYDDCSPNAPN). Residues 128–148 (IPAAAYAFFMMMFANITPLLM) traverse the membrane as a helical segment. At 149 to 160 (TGAFAERVKFKA) the chain is on the cytoplasmic side. A helical membrane pass occupies residues 161–181 (FIALTVAWEIIVFYPVAHWIW). Topologically, residues 182 to 194 (GGGWLHKYFGVLD) are extracellular. The helical transmembrane segment at 195 to 215 (FAGGIVIHTSAGVSALVIALY) threads the bilayer. Over 216 to 233 (VGRRKDFEKYGGEFPPSN) the chain is Cytoplasmic. Residues 234–254 (LPLATIGAALLWMGWFGFNAG) form a helical membrane-spanning segment. Topologically, residues 255–265 (SALAAGNIATS) are extracellular. Residues 266-286 (AVASTQIGGSFSAIVWIILSA) traverse the membrane as a helical segment. At 287–293 (AKGKPNT) the chain is on the cytoplasmic side. The helical transmembrane segment at 294-314 (VSVINGVIAGLAGITPASGYI) threads the bilayer. Residues 315–316 (NS) lie on the Extracellular side of the membrane. Residues 317-337 (QYSIGLGICLGLASYYSVVLL) form a helical membrane-spanning segment. Topologically, residues 338-351 (KHKLHIDDALDVSS) are cytoplasmic. The chain crosses the membrane as a helical span at residues 352-372 (VHGLTGIIGSLAIGFCAELSV). At 373 to 392 (NPNGANGAFYGNPKLIGTQL) the chain is on the extracellular side. A helical transmembrane segment spans residues 393–413 (LGVVSVAVWAAAWTWVLLKII). Residues 414 to 463 (DATIGVKIDESEEELGLDLVEHGEFAYHNISLQGNENHYSSVINSHDFFK) are Cytoplasmic-facing.

Belongs to the ammonia transporter channel (TC 1.A.11.2) family.

The protein resides in the cell membrane. It is found in the endosome membrane. The protein localises to the lysosome membrane. It localises to the cytoplasmic vesicle. Its subcellular location is the phagosome membrane. Its function is as follows. Ammonium transporter that mediates the excretion of ammonium. Controls ammonium homeostasis during growth and development. Ammonium has been shown to function as a morphogen at multiple steps during the development. This is Ammonium transporter 1 (amtA) from Dictyostelium discoideum (Social amoeba).